Here is a 551-residue protein sequence, read N- to C-terminus: Arginine--tRNA ligase (551 aa).

Residues 125-135 (ANPTGPLHIGH) carry the 'HIGH' region motif.

It belongs to the class-I aminoacyl-tRNA synthetase family. As to quaternary structure, monomer.

It is found in the cytoplasm. The enzyme catalyses tRNA(Arg) + L-arginine + ATP = L-arginyl-tRNA(Arg) + AMP + diphosphate. The polypeptide is Arginine--tRNA ligase (Nitratidesulfovibrio vulgaris (strain ATCC 29579 / DSM 644 / CCUG 34227 / NCIMB 8303 / VKM B-1760 / Hildenborough) (Desulfovibrio vulgaris)).